Here is an 89-residue protein sequence, read N- to C-terminus: Small ribosomal subunit protein uS15 (89 aa).

Belongs to the universal ribosomal protein uS15 family. In terms of assembly, part of the 30S ribosomal subunit. Forms a bridge to the 50S subunit in the 70S ribosome, contacting the 23S rRNA.

Functionally, one of the primary rRNA binding proteins, it binds directly to 16S rRNA where it helps nucleate assembly of the platform of the 30S subunit by binding and bridging several RNA helices of the 16S rRNA. Forms an intersubunit bridge (bridge B4) with the 23S rRNA of the 50S subunit in the ribosome. This chain is Small ribosomal subunit protein uS15, found in Haemophilus influenzae (strain PittGG).